Here is a 321-residue protein sequence, read N- to C-terminus: Gibberellin 2-beta-dioxygenase 4 (321 aa).

Residues 156–269 (DSDSVLRVNH…RLSTAYFAGP (114 aa)) enclose the Fe2OG dioxygenase domain. Fe cation is bound by residues H193, D195, and H250. Residue R260 is part of the active site.

This sequence belongs to the iron/ascorbate-dependent oxidoreductase family. GA2OX subfamily. Fe(2+) is required as a cofactor. Expressed at the base of the shoot apical meristem and developing leaf primordia.

The enzyme catalyses gibberellin A1 + 2-oxoglutarate + O2 = gibberellin A8 + succinate + CO2. Its pathway is plant hormone biosynthesis; gibberellin biosynthesis. Its function is as follows. Catalyzes the 2-beta-hydroxylation of several biologically active gibberellins, leading to the homeostatic regulation of their endogenous level. Catabolism of gibberellins (GAs) plays a central role in plant development. Converts GA9/GA20 to GA51/GA29 and GA4/GA1 to GA34/GA8. This is Gibberellin 2-beta-dioxygenase 4 (GA2OX4) from Arabidopsis thaliana (Mouse-ear cress).